We begin with the raw amino-acid sequence, 303 residues long: MRLRHVVSSLDLTRDDYFRIFELVDKFSNVKKLNYLSGKVVSLAFFEPSTRTAQSFHTAAIKLGADVIGFASEESTSIAKGENLADTIRMLNNYSNCIVMRHKFDGAALFASEISDIPIINAGDGKHEHPTQALIDLYTIYKVFGEIDGRTFGLLGDLKYARTVNSLLRALTRFKPKKVFLISPSQLKVRREILDGLNYPVIETENPYDVIQDIDVLYVTRIQKERFVDEVEYEKVKESYVVDLKLVNMMKKDGIILHPLPRVTEIDRKVDKTTNAKYFYQASLAVPVRMALFYEVLGERKDD.

Arginine 51 and threonine 52 together coordinate carbamoyl phosphate. An L-aspartate-binding site is contributed by lysine 80. Residues arginine 101, histidine 129, and glutamine 132 each coordinate carbamoyl phosphate. Positions 162 and 221 each coordinate L-aspartate. Residues leucine 260 and proline 261 each coordinate carbamoyl phosphate.

It belongs to the aspartate/ornithine carbamoyltransferase superfamily. ATCase family. As to quaternary structure, heterooligomer of catalytic and regulatory chains.

It carries out the reaction carbamoyl phosphate + L-aspartate = N-carbamoyl-L-aspartate + phosphate + H(+). The protein operates within pyrimidine metabolism; UMP biosynthesis via de novo pathway; (S)-dihydroorotate from bicarbonate: step 2/3. Its function is as follows. Catalyzes the condensation of carbamoyl phosphate and aspartate to form carbamoyl aspartate and inorganic phosphate, the committed step in the de novo pyrimidine nucleotide biosynthesis pathway. The protein is Aspartate carbamoyltransferase catalytic subunit of Saccharolobus islandicus (strain M.16.27) (Sulfolobus islandicus).